The primary structure comprises 447 residues: Zinc finger protein ZIC 1 (447 aa).

The C2H2-type 1; atypical zinc-finger motif lies at 225–260 (LICKWIEPEQLANPKKSCNKTFSTMHELVTHVTVEH). The C2H2-type 2; atypical zinc finger occupies 269–296 (HICFWEECPREGKPFKAKYKLVNHIRVH). 3 C2H2-type zinc fingers span residues 302–326 (FPCP…KRTH), 332–356 (FKCE…MHVH), and 362–384 (YLCK…MKVH). Residues 375–434 (SSLRKHMKVHESSSQGSQPSPAASSGYESSTPPTIVSPTTDNPTTSSMSPSSSAVHHTAG) form a disordered region. Low complexity predominate over residues 386–427 (SSSQGSQPSPAASSGYESSTPPTIVSPTTDNPTTSSMSPSSS).

The protein belongs to the GLI C2H2-type zinc-finger protein family. Interacts (via the C2H2-type domains 3, 4 and 5) with MDFIC (via the C2H2-type domains 3, 4 and 5). Interacts with GLI1; the interaction enhances transcription activation. Interacts with GLI2. Interacts with GLI3; the interaction enhances transcription activation. Expressed in osteoblasts (at protein level). Expressed in the CNS. A high level expression is seen in the cerebellum, while a low level expression is seen in the olfactory bulb, diencephalon, and brainstem. Expressed in lumbar spine and iliac crest.

It localises to the nucleus. The protein resides in the cytoplasm. Functionally, acts as a transcriptional activator. Involved in neurogenesis. Plays important roles in the early stage of organogenesis of the CNS, as well as during dorsal spinal cord development and maturation of the cerebellum. Involved in the spatial distribution of mossy fiber (MF) neurons within the pontine gray nucleus (PGN). Plays a role in the regulation of MF axon pathway choice. Promotes MF migration towards ipsilaterally-located cerebellar territories. May have a role in shear flow mechanotransduction in osteocytes. Retains nuclear GLI1 and GLI3 in the cytoplasm. Binds to the minimal GLI-consensus sequence 5'-TGGGTGGTC-3'. This chain is Zinc finger protein ZIC 1 (Zic1), found in Mus musculus (Mouse).